The chain runs to 162 residues: UPF0114 protein Sfri_3655 (162 aa).

A run of 3 helical transmembrane segments spans residues 15–35, 53–73, and 136–156; these read IMAP…IKFF, LVLI…LIMV, and IMWY…MGYL.

The protein belongs to the UPF0114 family.

The protein localises to the cell membrane. This chain is UPF0114 protein Sfri_3655, found in Shewanella frigidimarina (strain NCIMB 400).